A 242-amino-acid chain; its full sequence is MSGHSKFANIKHKKEKNDAAKGKIFTMIGRELAVAVKEGGPDPANNFKLAQVVAKAKANNMPNDTIERGIKKAAGDGNSVNYETATYEGYGPSGTAIIVKCLTDNKNRTAANVRNAFTKGQGSIGTQGCVSYMFDEKGQIIIDKEECDMDADDLMMQALDAGAEDFADEDDSYEITTAPADFDAVRAALEEAGITMASAEVTMIPQTYVTLTDEADITNIGRILDLLDDDDDVQEVYHNWEE.

Belongs to the TACO1 family.

The protein resides in the cytoplasm. The protein is Probable transcriptional regulatory protein EUBREC_1961 of Agathobacter rectalis (strain ATCC 33656 / DSM 3377 / JCM 17463 / KCTC 5835 / VPI 0990) (Eubacterium rectale).